Consider the following 119-residue polypeptide: Large ribosomal subunit protein bL12 (119 aa).

It belongs to the bacterial ribosomal protein bL12 family. In terms of assembly, homodimer. Part of the ribosomal stalk of the 50S ribosomal subunit. Forms a multimeric L10(L12)X complex, where L10 forms an elongated spine to which 2 to 4 L12 dimers bind in a sequential fashion. Binds GTP-bound translation factors.

In terms of biological role, forms part of the ribosomal stalk which helps the ribosome interact with GTP-bound translation factors. Is thus essential for accurate translation. This is Large ribosomal subunit protein bL12 from Bacillus cytotoxicus (strain DSM 22905 / CIP 110041 / 391-98 / NVH 391-98).